A 446-amino-acid chain; its full sequence is Phosphoglucosamine mutase (446 aa).

S104 serves as the catalytic Phosphoserine intermediate. 4 residues coordinate Mg(2+): S104, D241, D243, and D245. S104 bears the Phosphoserine mark.

It belongs to the phosphohexose mutase family. The cofactor is Mg(2+). Activated by phosphorylation.

The enzyme catalyses alpha-D-glucosamine 1-phosphate = D-glucosamine 6-phosphate. Catalyzes the conversion of glucosamine-6-phosphate to glucosamine-1-phosphate. This chain is Phosphoglucosamine mutase, found in Teredinibacter turnerae (strain ATCC 39867 / T7901).